The sequence spans 219 residues: 7-cyano-7-deazaguanine synthase (219 aa).

10-20 (FSGGQDSTTCL) serves as a coordination point for ATP. The Zn(2+) site is built by C186, C195, C198, and C201.

Belongs to the QueC family. In terms of assembly, homodimer. Requires Zn(2+) as cofactor.

The enzyme catalyses 7-carboxy-7-deazaguanine + NH4(+) + ATP = 7-cyano-7-deazaguanine + ADP + phosphate + H2O + H(+). It functions in the pathway purine metabolism; 7-cyano-7-deazaguanine biosynthesis. Catalyzes the ATP-dependent conversion of 7-carboxy-7-deazaguanine (CDG) to 7-cyano-7-deazaguanine (preQ(0)). The chain is 7-cyano-7-deazaguanine synthase from Bacillus licheniformis (strain ATCC 14580 / DSM 13 / JCM 2505 / CCUG 7422 / NBRC 12200 / NCIMB 9375 / NCTC 10341 / NRRL NRS-1264 / Gibson 46).